The chain runs to 400 residues: DNA polymerase IV (400 aa).

Residues 5 to 187 (IFLVDMNAFF…LPVEFMNGIG (183 aa)) form the UmuC domain. Mg(2+)-binding residues include D9 and D105. E106 is a catalytic residue.

This sequence belongs to the DNA polymerase type-Y family. In terms of assembly, monomer. Requires Mg(2+) as cofactor.

The protein localises to the cytoplasm. It catalyses the reaction DNA(n) + a 2'-deoxyribonucleoside 5'-triphosphate = DNA(n+1) + diphosphate. Functionally, poorly processive, error-prone DNA polymerase involved in untargeted mutagenesis. Copies undamaged DNA at stalled replication forks, which arise in vivo from mismatched or misaligned primer ends. These misaligned primers can be extended by PolIV. Exhibits no 3'-5' exonuclease (proofreading) activity. May be involved in translesional synthesis, in conjunction with the beta clamp from PolIII. The sequence is that of DNA polymerase IV from Clostridium kluyveri (strain ATCC 8527 / DSM 555 / NBRC 12016 / NCIMB 10680 / K1).